Reading from the N-terminus, the 204-residue chain is Large ribosomal subunit protein uL10 (204 aa).

Positions 170 to 204 (AADPSVIGGAGEASDQEPKTTETPEASAAQDNTNE) are disordered. Positions 192 to 204 (TPEASAAQDNTNE) are enriched in polar residues.

This sequence belongs to the universal ribosomal protein uL10 family. As to quaternary structure, part of the ribosomal stalk of the 50S ribosomal subunit. The N-terminus interacts with L11 and the large rRNA to form the base of the stalk. The C-terminus forms an elongated spine to which L12 dimers bind in a sequential fashion forming a multimeric L10(L12)X complex.

Its function is as follows. Forms part of the ribosomal stalk, playing a central role in the interaction of the ribosome with GTP-bound translation factors. The sequence is that of Large ribosomal subunit protein uL10 from Cutibacterium acnes (strain DSM 16379 / KPA171202) (Propionibacterium acnes).